Here is an 873-residue protein sequence, read N- to C-terminus: Cyanophycin synthetase (873 aa).

The ATP-grasp domain maps to 224–480 (KTILQDAGIP…VAAPVLDMLF (257 aa)). 495 to 501 (GTNGKTT) is an ATP binding site.

In the C-terminal section; belongs to the MurCDEF family. As to quaternary structure, homodimer.

It catalyses the reaction [L-4-(L-arginin-2-N-yl)aspartate](n) + L-aspartate + ATP = [L-4-(L-arginin-2-N-yl)aspartate](n)-L-aspartate + ADP + phosphate + H(+). The enzyme catalyses [L-4-(L-arginin-2-N-yl)aspartate](n)-L-aspartate + L-arginine + ATP = [L-4-(L-arginin-2-N-yl)aspartate](n+1) + ADP + phosphate + H(+). Catalyzes the ATP-dependent polymerization of arginine and aspartate to multi-L-arginyl-poly-L-aspartic acid (cyanophycin; a water-insoluble reserve polymer). The sequence is that of Cyanophycin synthetase (cphA) from Synechocystis sp. (strain ATCC 27184 / PCC 6803 / Kazusa).